Reading from the N-terminus, the 272-residue chain is S-adenosylmethionine decarboxylase proenzyme (272 aa).

Residue Ser122 is the Schiff-base intermediate with substrate; via pyruvic acid of the active site. Ser122 is modified (pyruvic acid (Ser); by autocatalysis). Residue His127 is the Proton acceptor; for processing activity of the active site. Cys150 serves as the catalytic Proton donor; for catalytic activity.

Belongs to the prokaryotic AdoMetDC family. Type 2 subfamily. As to quaternary structure, heterooctamer of four alpha and four beta chains arranged as a tetramer of alpha/beta heterodimers. Pyruvate is required as a cofactor. In terms of processing, is synthesized initially as an inactive proenzyme. Formation of the active enzyme involves a self-maturation process in which the active site pyruvoyl group is generated from an internal serine residue via an autocatalytic post-translational modification. Two non-identical subunits are generated from the proenzyme in this reaction, and the pyruvate is formed at the N-terminus of the alpha chain, which is derived from the carboxyl end of the proenzyme. The post-translation cleavage follows an unusual pathway, termed non-hydrolytic serinolysis, in which the side chain hydroxyl group of the serine supplies its oxygen atom to form the C-terminus of the beta chain, while the remainder of the serine residue undergoes an oxidative deamination to produce ammonia and the pyruvoyl group blocking the N-terminus of the alpha chain.

The catalysed reaction is S-adenosyl-L-methionine + H(+) = S-adenosyl 3-(methylsulfanyl)propylamine + CO2. The protein operates within amine and polyamine biosynthesis; S-adenosylmethioninamine biosynthesis; S-adenosylmethioninamine from S-adenosyl-L-methionine: step 1/1. Catalyzes the decarboxylation of S-adenosylmethionine to S-adenosylmethioninamine (dcAdoMet), the propylamine donor required for the synthesis of the polyamines spermine and spermidine from the diamine putrescine. The polypeptide is S-adenosylmethionine decarboxylase proenzyme (Clostridium botulinum (strain Eklund 17B / Type B)).